The chain runs to 167 residues: MYPATTPYETASGVGVAPVAGLFPVAGEAREWSSRLLDCFDDFDICCMTFWCPCITFGRTAEIVDHGMTSCGTSAALFALIQWLSGSQCTWAFSCTYRTRLRAQHGLPEAPCADFLVHLCCLHCALCQEYRELKARGYEPVLGWEFNAQRAAAGVAMCPPASQGMGR.

Residues 67 to 84 (GMTSCGTSAALFALIQWL) form a helical membrane-spanning segment.

The protein belongs to the cornifelin family. As to expression, expressed only in pollen.

The protein resides in the membrane. The sequence is that of Cell number regulator 3 (CNR3) from Zea mays (Maize).